The chain runs to 496 residues: Probable cytosol aminopeptidase (496 aa).

Mn(2+)-binding residues include Lys-261 and Asp-266. Lys-273 is an active-site residue. 3 residues coordinate Mn(2+): Asp-284, Asp-343, and Glu-345. Arg-347 is an active-site residue.

The protein belongs to the peptidase M17 family. It depends on Mn(2+) as a cofactor.

The protein resides in the cytoplasm. The catalysed reaction is Release of an N-terminal amino acid, Xaa-|-Yaa-, in which Xaa is preferably Leu, but may be other amino acids including Pro although not Arg or Lys, and Yaa may be Pro. Amino acid amides and methyl esters are also readily hydrolyzed, but rates on arylamides are exceedingly low.. The enzyme catalyses Release of an N-terminal amino acid, preferentially leucine, but not glutamic or aspartic acids.. Functionally, presumably involved in the processing and regular turnover of intracellular proteins. Catalyzes the removal of unsubstituted N-terminal amino acids from various peptides. In Bacillus licheniformis (strain ATCC 14580 / DSM 13 / JCM 2505 / CCUG 7422 / NBRC 12200 / NCIMB 9375 / NCTC 10341 / NRRL NRS-1264 / Gibson 46), this protein is Probable cytosol aminopeptidase.